A 327-amino-acid polypeptide reads, in one-letter code: Small ribosomal subunit protein uS2 (327 aa).

A disordered region spans residues 258-327; it reads AGHTPVSETL…PGVADGAALE (70 aa).

The protein belongs to the universal ribosomal protein uS2 family.

The protein is Small ribosomal subunit protein uS2 of Anaplasma marginale (strain St. Maries).